A 155-amino-acid chain; its full sequence is Endoribonuclease YbeY (155 aa).

Residues His-120, His-124, and His-130 each coordinate Zn(2+).

Belongs to the endoribonuclease YbeY family. Zn(2+) is required as a cofactor.

It localises to the cytoplasm. Its function is as follows. Single strand-specific metallo-endoribonuclease involved in late-stage 70S ribosome quality control and in maturation of the 3' terminus of the 16S rRNA. This chain is Endoribonuclease YbeY, found in Staphylococcus epidermidis (strain ATCC 35984 / DSM 28319 / BCRC 17069 / CCUG 31568 / BM 3577 / RP62A).